A 1103-amino-acid polypeptide reads, in one-letter code: Isoleucine--tRNA ligase (1103 aa).

Residues 1–25 (MSENVYPKANEGGETAHVAPNPSFP) are disordered. The 'HIGH' region signature appears at 65–75 (PFANGLPHYGH). The 'KMSKS' region motif lies at 649-653 (KMSKH). Lysine 652 is a binding site for ATP.

Belongs to the class-I aminoacyl-tRNA synthetase family. IleS type 2 subfamily. As to quaternary structure, monomer. Requires Zn(2+) as cofactor.

It localises to the cytoplasm. It catalyses the reaction tRNA(Ile) + L-isoleucine + ATP = L-isoleucyl-tRNA(Ile) + AMP + diphosphate. Functionally, catalyzes the attachment of isoleucine to tRNA(Ile). As IleRS can inadvertently accommodate and process structurally similar amino acids such as valine, to avoid such errors it has two additional distinct tRNA(Ile)-dependent editing activities. One activity is designated as 'pretransfer' editing and involves the hydrolysis of activated Val-AMP. The other activity is designated 'posttransfer' editing and involves deacylation of mischarged Val-tRNA(Ile). In Bifidobacterium longum (strain NCC 2705), this protein is Isoleucine--tRNA ligase.